The following is a 999-amino-acid chain: Receptor-like protein kinase 5 (999 aa).

An N-terminal signal peptide occupies residues 1–14 (MLYCLILLLCLSST). Over 15–621 (YLPSLSLNQD…LCRKITRSKN (607 aa)) the chain is Extracellular. LRR repeat units follow at residues 90–112 (SLHS…DFDT), 115–137 (NLIS…LPFN), 140–161 (NLKF…SFGE), 164–186 (KLES…LGNV), and 188–208 (TLKE…PSQL). 2 N-linked (GlcNAc...) asparagine glycosylation sites follow: asparagine 98 and asparagine 102. 2 N-linked (GlcNAc...) asparagine glycosylation sites follow: asparagine 150 and asparagine 185. Asparagine 210 carries an N-linked (GlcNAc...) asparagine glycan. 2 LRR repeats span residues 213-236 (ELQV…SRLT) and 237-259 (SLVN…ITQL). N-linked (GlcNAc...) asparagine glycosylation is found at asparagine 269 and asparagine 282. LRR repeat units lie at residues 285–307 (TLKR…LNLL), 308–330 (NLES…ITRS), 332–353 (TLSE…QLGA), 356–378 (PLQY…VCGE), 380–402 (KLEY…LGKC), 404–427 (SLTR…WGLP), 428–450 (RLSL…IIGA), 452–474 (NLSN…IGSL), 500–523 (QLSR…RGWK), 524–546 (NLNE…VGIL), 548–569 (VLNY…ELQN), and 571–593 (KLNV…YANK). An N-linked (GlcNAc...) asparagine glycan is attached at asparagine 452. Asparagine 576 is a glycosylation site (N-linked (GlcNAc...) asparagine). A helical transmembrane segment spans residues 622-641 (IGYVWILLTIFLLAGLVFVV). The Cytoplasmic segment spans residues 642-999 (GIVMFIAKCR…PYYTEDLNSV (358 aa)). The 286-residue stretch at 683-968 (LDEKNVIGFG…KVVIMLQEVS (286 aa)) folds into the Protein kinase domain. Residues 689–697 (IGFGSSGKV) and lysine 711 contribute to the ATP site. Phosphotyrosine is present on residues tyrosine 766 and tyrosine 806. Aspartate 819 serves as the catalytic Proton acceptor. At serine 856 the chain carries Phosphoserine. 2 positions are modified to phosphotyrosine: tyrosine 864 and tyrosine 871. Threonine 872 carries the phosphothreonine modification. The disordered stretch occupies residues 972–999 (PCSSPNTSKRSKTGGKLSPYYTEDLNSV).

It belongs to the protein kinase superfamily. Ser/Thr protein kinase family. As to quaternary structure, interacts with CST. Binds to IDA. Requires Mg(2+) as cofactor. The cofactor is Mn(2+). Autophosphorylated on Ser, Thr and Tyr residues. In terms of tissue distribution, expressed in roots and rosettes. Expressed at the base of petioles and pedicels, and in the abscission zones of the floral organs.

The protein resides in the cell membrane. It catalyses the reaction L-seryl-[protein] + ATP = O-phospho-L-seryl-[protein] + ADP + H(+). The catalysed reaction is L-threonyl-[protein] + ATP = O-phospho-L-threonyl-[protein] + ADP + H(+). The enzyme catalyses L-tyrosyl-[protein] + ATP = O-phospho-L-tyrosyl-[protein] + ADP + H(+). Receptor with a dual specificity kinase activity acting on both serine/threonine- and tyrosine-containing substrates that controls floral organ abscission. May interact with the 'INFLORESCENCE DEFICIENT IN ABSCISSION' (IDA) ligands family. This Arabidopsis thaliana (Mouse-ear cress) protein is Receptor-like protein kinase 5 (RLK5).